The primary structure comprises 1161 residues: Cingulin (1161 aa).

A head region spans residues 1 to 403 (MSSLSADRKP…SLIHERFCGV (403 aa)). 6 disordered regions span residues 29–53 (GGFP…SPSK), 79–309 (SYGV…LGRD), 649–678 (QSEL…KRET), 699–721 (SKAI…ESNL), 739–773 (RLHS…AASR), and 1123–1161 (QSRR…TTSC). The short motif at 51–65 (PSKYGVAVRVQGISG) is the ZIM element. 2 stretches are compositionally biased toward polar residues: residues 84–104 (LKTQ…SPYN) and 117–129 (PQGS…QPSS). The span at 189–203 (NGIGSSLNGTGLNGS) shows a compositional bias: low complexity. The segment covering 273-305 (EASSTSPTINPYAPNTSATVPKLNSTKPSSTGS) has biased composition (polar residues). Residues 413–1128 (SNMKTELEQA…RKIQQSRRST (716 aa)) adopt a coiled-coil conformation. Over residues 742–751 (SSVPDSSSSD) the composition is skewed to low complexity. Basic and acidic residues predominate over residues 755-773 (EENRSLKTQLEESRRAASR). Residues 1122-1161 (QQSRRSTLGSTLSSDEEDNYSDTKSITSILTDSPLQTTSC) are tail. Residues 1124-1134 (SRRSTLGSTLS) are compositionally biased toward low complexity. The segment covering 1143–1161 (DTKSITSILTDSPLQTTSC) has biased composition (polar residues).

The protein belongs to the cingulin family. Homodimer.

Its subcellular location is the cell junction. The protein localises to the tight junction. Its function is as follows. Probably plays a role in the formation and regulation of the tight junction (TJ) paracellular permeability barrier. Note=Localizes to the apical junction complex composed of tight and adherens junctions. In Danio rerio (Zebrafish), this protein is Cingulin.